Here is a 488-residue protein sequence, read N- to C-terminus: 3-octaprenyl-4-hydroxybenzoate carboxy-lyase (488 aa).

Mn(2+) is bound at residue asparagine 172. Prenylated FMN contacts are provided by residues 175–177, 189–191, and 194–195; these read IYR, RWL, and RG. Residue glutamate 238 participates in Mn(2+) binding. Aspartate 287 serves as the catalytic Proton donor.

This sequence belongs to the UbiD family. Homohexamer. Prenylated FMN is required as a cofactor. Requires Mn(2+) as cofactor.

It localises to the cell membrane. It carries out the reaction a 4-hydroxy-3-(all-trans-polyprenyl)benzoate + H(+) = a 2-(all-trans-polyprenyl)phenol + CO2. It participates in cofactor biosynthesis; ubiquinone biosynthesis. Its function is as follows. Catalyzes the decarboxylation of 3-octaprenyl-4-hydroxy benzoate to 2-octaprenylphenol, an intermediate step in ubiquinone biosynthesis. The chain is 3-octaprenyl-4-hydroxybenzoate carboxy-lyase from Alteromonas mediterranea (strain DSM 17117 / CIP 110805 / LMG 28347 / Deep ecotype).